Reading from the N-terminus, the 103-residue chain is MQKIRKGDKVVVLTGKDKGRTGEVIQVMPKEDRAVVRGVNVVKRHQRQTQNQEAGIISKEAPIHLSNIAIADPKDGKPTRVGFKIDGEKKVRVAKRSGEVIDG.

The protein belongs to the universal ribosomal protein uL24 family. As to quaternary structure, part of the 50S ribosomal subunit.

Its function is as follows. One of two assembly initiator proteins, it binds directly to the 5'-end of the 23S rRNA, where it nucleates assembly of the 50S subunit. One of the proteins that surrounds the polypeptide exit tunnel on the outside of the subunit. The chain is Large ribosomal subunit protein uL24 from Sinorhizobium fredii (strain NBRC 101917 / NGR234).